The chain runs to 198 residues: A-type ATP synthase subunit E (198 aa).

The protein belongs to the V-ATPase E subunit family. As to quaternary structure, has multiple subunits with at least A(3), B(3), C, D, E, F, H, I and proteolipid K(x).

It is found in the cell membrane. Component of the A-type ATP synthase that produces ATP from ADP in the presence of a proton gradient across the membrane. This Pyrococcus furiosus (strain ATCC 43587 / DSM 3638 / JCM 8422 / Vc1) protein is A-type ATP synthase subunit E.